The sequence spans 368 residues: Mitogen-activated protein kinase HOG1B (368 aa).

One can recognise a Protein kinase domain in the interval 20-299 (YVNLEPVGMG…ASQALAHPYL (280 aa)). ATP contacts are provided by residues 26 to 34 (VGMGAFGLV) and lysine 49. Catalysis depends on aspartate 141, which acts as the Proton acceptor. Residue threonine 171 is modified to Phosphothreonine. A TXY motif is present at residues 171–173 (TGY). Tyrosine 173 is subject to Phosphotyrosine.

The protein belongs to the protein kinase superfamily. Ser/Thr protein kinase family. MAP kinase subfamily. HOG1 sub-subfamily. The cofactor is Mg(2+). Post-translationally, phosphorylated. Dually phosphorylated on Thr-171 and Tyr-173, which activates the enzyme. Rapidly dephosphorylated upon either hypo- or hyperosmotic shock.

Its subcellular location is the cytoplasm. The protein resides in the nucleus. It catalyses the reaction L-seryl-[protein] + ATP = O-phospho-L-seryl-[protein] + ADP + H(+). The enzyme catalyses L-threonyl-[protein] + ATP = O-phospho-L-threonyl-[protein] + ADP + H(+). With respect to regulation, activated by tyrosine and threonine phosphorylation. In terms of biological role, mitogen-activated protein kinase involved in a signal transduction pathway that is activated by changes in the osmolarity of the extracellular environment. Controls osmotic regulation of transcription of target genes. This chain is Mitogen-activated protein kinase HOG1B (HOG1B), found in Wallemia ichthyophaga (strain EXF-994 / CBS 113033).